Reading from the N-terminus, the 254-residue chain is Syntaxin-6 (254 aa).

Residues 1 to 233 (MSMEDPFFVV…VSHMTSDRRQ (233 aa)) lie on the Cytoplasmic side of the membrane. Positions 46–72 (TTNELRNNLRSIEWDLEDLDETISIVE) form a coiled coil. Residues 103–138 (KDQMSNSSMQALAERKNRQALLGESSSQSWSSGPDK) form a disordered region. Residues 162–224 (QLIVEQQDEQ…DNVMKKLAKV (63 aa)) form the t-SNARE coiled-coil homology domain. A helical; Anchor for type IV membrane protein membrane pass occupies residues 234–254 (WCAIIVLFVILLVVLVLFLVL).

The protein belongs to the syntaxin family.

It is found in the golgi apparatus membrane. The protein localises to the golgi apparatus. Its subcellular location is the trans-Golgi network membrane. The protein resides in the recycling endosome membrane. SNARE promoting movement of transport vesicles to target membranes. Targets endosomes to the trans-Golgi network, and may therefore function in retrograde trafficking. Together with SNARE STX12, promotes movement of vesicles from endosomes to the cell membrane, and may therefore function in the endocytic recycling pathway. This is Syntaxin-6 (STX6) from Gallus gallus (Chicken).